A 194-amino-acid polypeptide reads, in one-letter code: Protein GrpE (194 aa).

The segment at 1 to 53 (MVENEKTSVEETEEKAETEDEMLTEDPSNEDSDEANEEGNELSEEEKRIAELE) is disordered. Positions 10 to 44 (EETEEKAETEDEMLTEDPSNEDSDEANEEGNELSE) are enriched in acidic residues.

It belongs to the GrpE family. Homodimer.

It is found in the cytoplasm. Functionally, participates actively in the response to hyperosmotic and heat shock by preventing the aggregation of stress-denatured proteins, in association with DnaK and GrpE. It is the nucleotide exchange factor for DnaK and may function as a thermosensor. Unfolded proteins bind initially to DnaJ; upon interaction with the DnaJ-bound protein, DnaK hydrolyzes its bound ATP, resulting in the formation of a stable complex. GrpE releases ADP from DnaK; ATP binding to DnaK triggers the release of the substrate protein, thus completing the reaction cycle. Several rounds of ATP-dependent interactions between DnaJ, DnaK and GrpE are required for fully efficient folding. The sequence is that of Protein GrpE from Halalkalibacterium halodurans (strain ATCC BAA-125 / DSM 18197 / FERM 7344 / JCM 9153 / C-125) (Bacillus halodurans).